Here is a 296-residue protein sequence, read N- to C-terminus: Lipoyl synthase (296 aa).

The [4Fe-4S] cluster site is built by C37, C42, C48, C63, C67, C70, and S276. The 217-residue stretch at 49 to 265 (WSKKHATMMI…ERVARTKGFL (217 aa)) folds into the Radical SAM core domain.

Belongs to the radical SAM superfamily. Lipoyl synthase family. [4Fe-4S] cluster serves as cofactor.

The protein resides in the cytoplasm. It catalyses the reaction [[Fe-S] cluster scaffold protein carrying a second [4Fe-4S](2+) cluster] + N(6)-octanoyl-L-lysyl-[protein] + 2 oxidized [2Fe-2S]-[ferredoxin] + 2 S-adenosyl-L-methionine + 4 H(+) = [[Fe-S] cluster scaffold protein] + N(6)-[(R)-dihydrolipoyl]-L-lysyl-[protein] + 4 Fe(3+) + 2 hydrogen sulfide + 2 5'-deoxyadenosine + 2 L-methionine + 2 reduced [2Fe-2S]-[ferredoxin]. The protein operates within protein modification; protein lipoylation via endogenous pathway; protein N(6)-(lipoyl)lysine from octanoyl-[acyl-carrier-protein]: step 2/2. Its function is as follows. Catalyzes the radical-mediated insertion of two sulfur atoms into the C-6 and C-8 positions of the octanoyl moiety bound to the lipoyl domains of lipoate-dependent enzymes, thereby converting the octanoylated domains into lipoylated derivatives. The protein is Lipoyl synthase of Rickettsia canadensis (strain McKiel).